We begin with the raw amino-acid sequence, 350 residues long: Olfactory receptor 52I2 (350 aa).

At 1–55 (MCQQILRDCILLIHHLCINRKKVSLVMLGPAYNHTMETPASFLLVGIPGLQSSHL) the chain is on the extracellular side. N-linked (GlcNAc...) asparagine glycosylation is present at Asn-33. Residues 56–76 (WLAISLSAMYIIALLGNTIIV) traverse the membrane as a helical segment. The Cytoplasmic segment spans residues 77 to 84 (TAIWMDST). A helical membrane pass occupies residues 85-105 (RHEPMYCFLCVLAAVDIVMAS). The Extracellular segment spans residues 106-129 (SVVPKMVSIFCSGDSSISFSACFT). An intrachain disulfide couples Cys-127 to Cys-219. Residues 130 to 150 (QMFFVHLATAVETGLLLTMAF) form a helical membrane-spanning segment. Residues 151 to 169 (DRYVAICKPLHYKRILTPQ) lie on the Cytoplasmic side of the membrane. A helical membrane pass occupies residues 170–190 (VMLGMSMAITIRAIIAITPLS). The Extracellular segment spans residues 191 to 226 (WMVSHLPFCGSNVVVHSYCEHIALARLACADPVPSS). The helical transmembrane segment at 227 to 247 (LYSLIGSSLMVGSDVAFIAAS) threads the bilayer. Topologically, residues 248-267 (YILILKAVFGLSSKTAQLKA) are cytoplasmic. A helical transmembrane segment spans residues 268–288 (LSTCGSHVGVMALYYLPGMAS). The Extracellular portion of the chain corresponds to 289–304 (IYAAWLGQDVVPLHTQ). Residues 305–325 (VLLADLYVIIPATLNPIIYGM) traverse the membrane as a helical segment. Topologically, residues 326 to 350 (RTKQLRERIWSYLMHVLFDHSNLGS) are cytoplasmic.

It belongs to the G-protein coupled receptor 1 family.

The protein localises to the cell membrane. In terms of biological role, odorant receptor. This Homo sapiens (Human) protein is Olfactory receptor 52I2 (OR52I2).